The primary structure comprises 402 residues: CCA-adding enzyme (402 aa).

2 residues coordinate ATP: Gly32 and Arg35. Residues Gly32 and Arg35 each coordinate CTP. Mg(2+)-binding residues include Asp45 and Asp47. Arg119, Asp162, Arg165, Arg168, and Arg171 together coordinate ATP. 5 residues coordinate CTP: Arg119, Asp162, Arg165, Arg168, and Arg171.

It belongs to the tRNA nucleotidyltransferase/poly(A) polymerase family. Bacterial CCA-adding enzyme type 3 subfamily. In terms of assembly, homodimer. Mg(2+) serves as cofactor.

It carries out the reaction a tRNA precursor + 2 CTP + ATP = a tRNA with a 3' CCA end + 3 diphosphate. The catalysed reaction is a tRNA with a 3' CCA end + 2 CTP + ATP = a tRNA with a 3' CCACCA end + 3 diphosphate. Its function is as follows. Catalyzes the addition and repair of the essential 3'-terminal CCA sequence in tRNAs without using a nucleic acid template. Adds these three nucleotides in the order of C, C, and A to the tRNA nucleotide-73, using CTP and ATP as substrates and producing inorganic pyrophosphate. tRNA 3'-terminal CCA addition is required both for tRNA processing and repair. Also involved in tRNA surveillance by mediating tandem CCA addition to generate a CCACCA at the 3' terminus of unstable tRNAs. While stable tRNAs receive only 3'-terminal CCA, unstable tRNAs are marked with CCACCA and rapidly degraded. The sequence is that of CCA-adding enzyme from Lactococcus lactis subsp. cremoris (strain SK11).